A 345-amino-acid polypeptide reads, in one-letter code: NADH-quinone oxidoreductase subunit H 1 (345 aa).

9 consecutive transmembrane segments (helical) span residues 11–31 (IILT…ISLL), 50–70 (PNVV…KYIF), 84–104 (FFLA…VIPF), 115–135 (VAIL…IMGG), 161–181 (LGLI…SHIV), 187–207 (AFGL…LFFI), 248–268 (YIAI…GWLS), 277–297 (VFWM…VKAI), and 309–329 (IGWK…AFLA).

This sequence belongs to the complex I subunit 1 family. NDH-1 is composed of 14 different subunits. Subunits NuoA, H, J, K, L, M, N constitute the membrane sector of the complex.

It is found in the cell inner membrane. The enzyme catalyses a quinone + NADH + 5 H(+)(in) = a quinol + NAD(+) + 4 H(+)(out). Functionally, NDH-1 shuttles electrons from NADH, via FMN and iron-sulfur (Fe-S) centers, to quinones in the respiratory chain. The immediate electron acceptor for the enzyme in this species is believed to be ubiquinone. Couples the redox reaction to proton translocation (for every two electrons transferred, four hydrogen ions are translocated across the cytoplasmic membrane), and thus conserves the redox energy in a proton gradient. This subunit may bind ubiquinone. The protein is NADH-quinone oxidoreductase subunit H 1 of Cereibacter sphaeroides (strain ATCC 17023 / DSM 158 / JCM 6121 / CCUG 31486 / LMG 2827 / NBRC 12203 / NCIMB 8253 / ATH 2.4.1.) (Rhodobacter sphaeroides).